Here is a 166-residue protein sequence, read N- to C-terminus: NAD(P)H-quinone oxidoreductase subunit I, chloroplastic (166 aa).

4Fe-4S ferredoxin-type domains follow at residues glycine 55 to lysine 84 and leucine 95 to glutamate 124. Positions 64, 67, 70, 74, 104, 107, 110, and 114 each coordinate [4Fe-4S] cluster.

This sequence belongs to the complex I 23 kDa subunit family. In terms of assembly, NDH is composed of at least 16 different subunits, 5 of which are encoded in the nucleus. [4Fe-4S] cluster serves as cofactor.

Its subcellular location is the plastid. The protein resides in the chloroplast thylakoid membrane. The catalysed reaction is a plastoquinone + NADH + (n+1) H(+)(in) = a plastoquinol + NAD(+) + n H(+)(out). It catalyses the reaction a plastoquinone + NADPH + (n+1) H(+)(in) = a plastoquinol + NADP(+) + n H(+)(out). Its function is as follows. NDH shuttles electrons from NAD(P)H:plastoquinone, via FMN and iron-sulfur (Fe-S) centers, to quinones in the photosynthetic chain and possibly in a chloroplast respiratory chain. The immediate electron acceptor for the enzyme in this species is believed to be plastoquinone. Couples the redox reaction to proton translocation, and thus conserves the redox energy in a proton gradient. In Lactuca sativa (Garden lettuce), this protein is NAD(P)H-quinone oxidoreductase subunit I, chloroplastic.